Consider the following 1122-residue polypeptide: Histone deacetylase 5 (1122 aa).

A disordered region spans residues 1–24; the sequence is MNSPNESDGMSGREPSLEILPRTS. K35 is covalently cross-linked (Glycyl lysine isopeptide (Lys-Gly) (interchain with G-Cter in SUMO2)). Disordered stretches follow at residues 41 to 60 and 196 to 281; these read AMPSSMGGGGGGSPSPVELR and KEPT…SSPL. The span at 247–258 shows a compositional bias: basic and acidic residues; it reads DSRDDFPLRKTA. S259 is subject to Phosphoserine; by AMPK, CaMK1, SIK1 and PKD/PRKD1. Residues 272-281 show a composition bias toward basic and acidic residues; sequence KVAERRSSPL. T292 is subject to Phosphothreonine; by PKC. Disordered stretches follow at residues 302 to 343 and 481 to 504; these read GAGP…NIPT and MRTVGKLPRHRPLSRTQSSPLPQS. Positions 312-327 are enriched in low complexity; the sequence is NSAPGSGPSSPNSSHS. Positions 328-340 are enriched in polar residues; that stretch reads TIAENGFTGSVPN. The segment covering 494 to 504 has biased composition (low complexity); it reads SRTQSSPLPQS. Position 498 is a phosphoserine; by AMPK, CaMK1, SIK1 and PKD/PRKD1 (S498). Position 533 is an N6-acetyllysine (K533). Residues 536-625 form a disordered region; that stretch reads TKTGELPRQP…GPDLEEPGAG (90 aa). Positions 581 to 621 are enriched in acidic residues; that stretch reads STQEDLEEEDEEDDGEEEEDCIQVKDEEGESGAEEGPDLEE. Residues S611 and S661 each carry the phosphoserine modification. The tract at residues 684 to 1028 is histone deacetylase; it reads GVVYDTFMLK…VSALLSVELQ (345 aa). C696, C698, H704, and C781 together coordinate Zn(2+). H833 is an active-site residue. The Nuclear export signal signature appears at 1081–1122; sequence EEAETVSAMALLSVGAEQAQAAAAREHSPRPAEEPMEQEPAL. The interval 1097-1122 is disordered; the sequence is EQAQAAAAREHSPRPAEEPMEQEPAL. Over residues 1104–1113 the composition is skewed to basic and acidic residues; sequence AREHSPRPAE. S1108 carries the phosphoserine modification.

This sequence belongs to the histone deacetylase family. HD type 2 subfamily. In terms of assembly, interacts with AHRR, BAHD1, BCOR, HDAC7, HDAC9, CTBP1, MEF2C, NCOR2, NRIP1, PHB2 and a 14-3-3 chaperone protein. Interacts with BCL6, DDIT3/CHOP, GRK5, KDM5B and MYOCD. Interacts with EP300 in the presence of TFAP2C. Interacts with ANKRA2. Interacts with CUL7 (as part of the 3M complex); negatively regulated by ANKRA2. Interacts with ZBTB7B; the interaction allows the recruitment of HDAC4 on CD8 loci for deacetylation and possible inhibition of CD8 genes expression. Interacts with RARA. In terms of processing, phosphorylated by AMPK, CaMK1, SIK1 and PRKD1 at Ser-259 and Ser-498. The phosphorylation is required for the export to the cytoplasm and inhibition. Phosphorylated by the PKC kinases PKN1 and PKN2, impairing nuclear import. Phosphorylated by GRK5, leading to nuclear export of HDAC5 and allowing MEF2-mediated transcription. Ubiquitinated. Polyubiquitination however does not lead to its degradation. In terms of tissue distribution, ubiquitous.

It localises to the nucleus. It is found in the cytoplasm. It carries out the reaction N(6)-acetyl-L-lysyl-[histone] + H2O = L-lysyl-[histone] + acetate. In terms of biological role, responsible for the deacetylation of lysine residues on the N-terminal part of the core histones (H2A, H2B, H3 and H4). Histone deacetylation gives a tag for epigenetic repression and plays an important role in transcriptional regulation, cell cycle progression and developmental events. Histone deacetylases act via the formation of large multiprotein complexes. Involved in muscle maturation by repressing transcription of myocyte enhancer MEF2C. During muscle differentiation, it shuttles into the cytoplasm, allowing the expression of myocyte enhancer factors. Involved in the MTA1-mediated epigenetic regulation of ESR1 expression in breast cancer. Serves as a corepressor of RARA and causes its deacetylation. In association with RARA, plays a role in the repression of microRNA-10a and thereby in the inflammatory response. In Homo sapiens (Human), this protein is Histone deacetylase 5 (HDAC5).